Here is a 333-residue protein sequence, read N- to C-terminus: Anthranilate phosphoribosyltransferase (333 aa).

Residues Gly80, 83-84 (GD), Thr88, 90-93 (NLST), 108-116 (KHGNRSASG), and Ser120 contribute to the 5-phospho-alpha-D-ribose 1-diphosphate site. Gly80 contributes to the anthranilate binding site. Mg(2+) is bound at residue Ser92. Asn111 contributes to the anthranilate binding site. Arg166 contacts anthranilate. 2 residues coordinate Mg(2+): Asp224 and Glu225.

Belongs to the anthranilate phosphoribosyltransferase family. As to quaternary structure, homodimer. Requires Mg(2+) as cofactor.

The enzyme catalyses N-(5-phospho-beta-D-ribosyl)anthranilate + diphosphate = 5-phospho-alpha-D-ribose 1-diphosphate + anthranilate. It participates in amino-acid biosynthesis; L-tryptophan biosynthesis; L-tryptophan from chorismate: step 2/5. In terms of biological role, catalyzes the transfer of the phosphoribosyl group of 5-phosphorylribose-1-pyrophosphate (PRPP) to anthranilate to yield N-(5'-phosphoribosyl)-anthranilate (PRA). In Pyrobaculum aerophilum (strain ATCC 51768 / DSM 7523 / JCM 9630 / CIP 104966 / NBRC 100827 / IM2), this protein is Anthranilate phosphoribosyltransferase.